We begin with the raw amino-acid sequence, 413 residues long: Arginine biosynthesis bifunctional protein ArgJ, mitochondrial (413 aa).

Residues T168, K194, T205, and E292 each coordinate substrate. T205 serves as the catalytic Nucleophile.

The protein belongs to the ArgJ family. Heterodimer of an alpha and a beta chain. The alpha and beta chains are autoproteolytically processed from a single precursor protein within the mitochondrion.

It localises to the mitochondrion matrix. It carries out the reaction N(2)-acetyl-L-ornithine + L-glutamate = N-acetyl-L-glutamate + L-ornithine. The catalysed reaction is L-glutamate + acetyl-CoA = N-acetyl-L-glutamate + CoA + H(+). It participates in amino-acid biosynthesis; L-arginine biosynthesis; L-ornithine and N-acetyl-L-glutamate from L-glutamate and N(2)-acetyl-L-ornithine (cyclic): step 1/1. The protein operates within amino-acid biosynthesis; L-arginine biosynthesis; N(2)-acetyl-L-ornithine from L-glutamate: step 1/4. Functionally, catalyzes two activities which are involved in the cyclic version of arginine biosynthesis: the synthesis of acetylglutamate from glutamate and acetyl-CoA, and of ornithine by transacetylation between acetylornithine and glutamate. The sequence is that of Arginine biosynthesis bifunctional protein ArgJ, mitochondrial from Clavispora lusitaniae (strain ATCC 42720) (Yeast).